Consider the following 501-residue polypeptide: Glycerol kinase (501 aa).

Thr14 lines the ADP pocket. Residues Thr14, Thr15, and Ser16 each contribute to the ATP site. Position 14 (Thr14) interacts with sn-glycerol 3-phosphate. Arg18 is an ADP binding site. Positions 84, 85, and 136 each coordinate sn-glycerol 3-phosphate. Glycerol contacts are provided by Arg84, Glu85, and Tyr136. A Phosphohistidine; by HPr modification is found at His231. Asp245 is a binding site for sn-glycerol 3-phosphate. Glycerol contacts are provided by Asp245 and Gln246. 2 residues coordinate ADP: Thr267 and Gly310. 4 residues coordinate ATP: Thr267, Gly310, Gln314, and Gly411. Residues Gly411 and Asn415 each coordinate ADP.

The protein belongs to the FGGY kinase family. Homotetramer and homodimer (in equilibrium). Post-translationally, the phosphoenolpyruvate-dependent sugar phosphotransferase system (PTS), including enzyme I, and histidine-containing protein (HPr) are required for the phosphorylation of His-231, which leads to the activation of the enzyme.

It carries out the reaction glycerol + ATP = sn-glycerol 3-phosphate + ADP + H(+). The protein operates within polyol metabolism; glycerol degradation via glycerol kinase pathway; sn-glycerol 3-phosphate from glycerol: step 1/1. With respect to regulation, activated by phosphorylation and inhibited by fructose 1,6-bisphosphate (FBP). Key enzyme in the regulation of glycerol uptake and metabolism. Catalyzes the phosphorylation of glycerol to yield sn-glycerol 3-phosphate. In Enterococcus faecalis (strain ATCC 700802 / V583), this protein is Glycerol kinase.